We begin with the raw amino-acid sequence, 354 residues long: S-adenosylmethionine:tRNA ribosyltransferase-isomerase (354 aa).

It belongs to the QueA family. In terms of assembly, monomer.

Its subcellular location is the cytoplasm. The catalysed reaction is 7-aminomethyl-7-carbaguanosine(34) in tRNA + S-adenosyl-L-methionine = epoxyqueuosine(34) in tRNA + adenine + L-methionine + 2 H(+). The protein operates within tRNA modification; tRNA-queuosine biosynthesis. Transfers and isomerizes the ribose moiety from AdoMet to the 7-aminomethyl group of 7-deazaguanine (preQ1-tRNA) to give epoxyqueuosine (oQ-tRNA). The sequence is that of S-adenosylmethionine:tRNA ribosyltransferase-isomerase from Methylobacterium radiotolerans (strain ATCC 27329 / DSM 1819 / JCM 2831 / NBRC 15690 / NCIMB 10815 / 0-1).